Here is a 3396-residue protein sequence, read N- to C-terminus: Versican core protein (3396 aa).

Positions 1–20 (MFINIKSILWMCSTLIVTHA) are cleaved as a signal peptide. One can recognise an Ig-like V-type domain in the interval 21-146 (LHKVKVGKSP…EDTQDTVSLT (126 aa)). 5 cysteine pairs are disulfide-bonded: Cys44/Cys130, Cys172/Cys243, Cys196/Cys217, Cys270/Cys345, and Cys294/Cys315. N-linked (GlcNAc...) asparagine glycosylation occurs at Asn57. 2 consecutive Link domains span residues 150-245 (VVFH…YCYV) and 251-347 (DVFH…YCFK). Asn330 carries N-linked (GlcNAc...) asparagine glycosylation. The segment at 348–1335 (PKEATTIDLS…IIEVRENKTG (988 aa)) is GAG-alpha (glucosaminoglycan attachment domain). The span at 420 to 430 (ATKLPTPTGST) shows a compositional bias: polar residues. Disordered regions lie at residues 420–439 (ATKLPTPTGSTKKPWDMDDY) and 603–622 (STTVSPLIMPDNNGSSMDDW). Residue Asn615 is glycosylated (N-linked (GlcNAc...) asparagine). Ser659 is a glycosylation site (O-linked (Xyl...) (chondroitin sulfate) serine). N-linked (GlcNAc...) asparagine glycans are attached at residues Asn782 and Asn809. 3 disordered regions span residues 807 to 829 (EDNTTSKPLESTEPSASSKLPPA), 1126 to 1154 (IGPKVSLSPGPEQKYETEGSSTTGFTSSL), and 1277 to 1316 (REYFTTSSPPATQPTRPPTVEDKEAFGPQALSTPQPPAST). Positions 811–824 (TSKPLESTEPSASS) are enriched in polar residues. A compositionally biased stretch (low complexity) spans 1143–1154 (EGSSTTGFTSSL). N-linked (GlcNAc...) asparagine glycans are attached at residues Asn1332 and Asn1398. The interval 1336–3089 (RMSDLSVIGH…VEGTAIYLPG (1754 aa)) is GAG-beta. Disordered regions lie at residues 1420–1497 (VPKD…SGGE) and 1510–1539 (FESGTAKKGAESVTERDTEVGHQAHEHTEP). The span at 1422 to 1433 (KDPEAAEARRGQ) shows a compositional bias: basic and acidic residues. 2 N-linked (GlcNAc...) asparagine glycosylation sites follow: Asn1442 and Asn1468. Residues 1469 to 1480 (ESTETTESLEVT) show a composition bias toward low complexity. A compositionally biased stretch (basic and acidic residues) spans 1517 to 1538 (KGAESVTERDTEVGHQAHEHTE). 2 O-linked (Xyl...) (chondroitin sulfate) serine glycosylation sites follow: Ser1548 and Ser1631. A glycan (N-linked (GlcNAc...) asparagine) is linked at Asn1663. 2 disordered regions span residues 1717–1737 (STTVEEKKRKEEEGTTGTAST) and 1759–1789 (PNVATSSDSGTRKSFMSLTTPTQSEREMTDS). Residues 1720-1729 (VEEKKRKEEE) show a composition bias toward basic and acidic residues. A compositionally biased stretch (polar residues) spans 1760 to 1781 (NVATSSDSGTRKSFMSLTTPTQ). The N-linked (GlcNAc...) asparagine glycan is linked to Asn1898. O-linked (Xyl...) (chondroitin sulfate) serine glycosylation is found at Ser1935 and Ser1959. 3 disordered regions span residues 1962–1994 (AAFRDTQTSPSTVPTSVHISHISDSEGPSSTMV), 2107–2134 (RQEIESETTSEEQIQEEKSFESPQNSPA), and 2168–2188 (KEMKEEDTSLVNMSTPDPDAN). Over residues 1969 to 1978 (TSPSTVPTSV) the composition is skewed to low complexity. A compositionally biased stretch (acidic residues) spans 2111 to 2120 (ESETTSEEQI). At Ser2116 the chain carries Phosphoserine; by FAM20C. N-linked (GlcNAc...) asparagine glycosylation occurs at Asn2179. Residues Ser2247 and Ser2254 are each glycosylated (O-linked (Xyl...) (chondroitin sulfate) serine). N-linked (GlcNAc...) asparagine glycosylation is found at Asn2272, Asn2280, Asn2360, Asn2385, and Asn2392. Disordered regions lie at residues 2371–2396 (TSRPQTITEQDSNKNSSTAEINETTT), 2445–2473 (SATTQATRQESSTTFVSDGSLEKHPEVPS), 2493–2518 (SEQNKSSPDPTSTLSNTVSYERSTDG), and 2598–2617 (DTEVPSEPHDSNDESNDDST). Polar residues-rich tracts occupy residues 2445–2461 (SATTQATRQESSTTFVS) and 2496–2513 (NKSSPDPTSTLSNTVSYE). A glycan (N-linked (GlcNAc...) asparagine) is linked at Asn2496. Residue Ser2608 is modified to Phosphoserine. Thr2617 carries the post-translational modification Phosphothreonine. A glycan (N-linked (GlcNAc...) asparagine) is linked at Asn2628. O-linked (Xyl...) (chondroitin sulfate) serine glycosylation is found at Ser2722, Ser2723, and Ser2767. Disordered stretches follow at residues 2834-2856 (GSEASGHTEIPQPSALPGIDVGS) and 2881-2905 (EEYLHITEPPSLSPDTKLEPSEDDG). Residues 2896-2905 (TKLEPSEDDG) are compositionally biased toward basic and acidic residues. A glycan (N-linked (GlcNAc...) asparagine) is linked at Asn2934. O-linked (Xyl...) (chondroitin sulfate) serine glycosylation is present at Ser2941. An N-linked (GlcNAc...) asparagine glycan is attached at Asn3067. The 37-residue stretch at 3089–3125 (GPDRCKMNPCLNGGTCYPTETSYVCTCVPGYSGDQCE) folds into the EGF-like 1 domain. 11 disulfide bridges follow: Cys3093–Cys3104, Cys3098–Cys3113, Cys3115–Cys3124, Cys3131–Cys3142, Cys3136–Cys3151, Cys3153–Cys3162, Cys3169–Cys3180, Cys3197–Cys3289, Cys3265–Cys3281, Cys3296–Cys3339, and Cys3325–Cys3352. Residues 3127–3163 (DFDECHSNPCRNGATCVDGFNTFRCLCLPSYVGALCE) form the EGF-like 2; calcium-binding domain. In terms of domain architecture, C-type lectin spans 3176-3290 (FQGQCYKYFA…CNYHLTYTCK (115 aa)). Residues 3294 to 3354 (VACGQPPVVE…WAIPKITCMN (61 aa)) form the Sushi domain. Residues Asn3369 and Asn3379 are each glycosylated (N-linked (GlcNAc...) asparagine). A compositionally biased stretch (polar residues) spans 3371 to 3380 (SSAKDNSINT). The segment at 3371 to 3396 (SSAKDNSINTSKHDHRWSRRWQESRR) is disordered.

Belongs to the aggrecan/versican proteoglycan family. As to quaternary structure, interacts with FBLN1. Phosphorylated by FAM20C in the extracellular medium. Post-translationally, proteolytically cleaved by ADAMTS5 and ADAMTS15 in the pericellular matrix surrounding myoblasts, facilitating myoblast contact and fusion which is required for skeletal muscle development and regeneration. In terms of tissue distribution, detected in placenta (at protein level). Detected in cerebrospinal fluid, fibroblasts and urine (at protein level). Expressed in the retina (at protein level). Cerebral white matter and plasma. Isoform V0: Expressed in normal brain, gliomas, medulloblastomas, schwannomas, neurofibromas, and meningiomas. Isoform V1: Expressed in normal brain, gliomas, medulloblastomas, schwannomas, neurofibromas, and meningiomas. Isoform V2: Restricted to normal brain and gliomas. Isoform V3: Found in all these tissues except medulloblastomas.

It is found in the secreted. The protein resides in the extracellular space. Its subcellular location is the extracellular matrix. The protein localises to the cell projection. It localises to the cilium. It is found in the photoreceptor outer segment. The protein resides in the interphotoreceptor matrix. Functionally, may play a role in intercellular signaling and in connecting cells with the extracellular matrix. May take part in the regulation of cell motility, growth and differentiation. Binds hyaluronic acid. This Homo sapiens (Human) protein is Versican core protein (VCAN).